A 423-amino-acid polypeptide reads, in one-letter code: MLRSKRTKVVYKTADVILPPVEENINSENKNEGEVKVTTFADEPKIEQEEPQQKPEVVDVYSNETDKNEEEVSIITSEDEEEDEKGMLFKRPGGKKHNYAPSKYVGEEFDLDALKEHRKMVKRWIIGISVRFGFWFALLIPVAVLLRPYTIECEPINTFSEFSLCVILFLLLQAGIDLGLAIFSYRKVGKFLESPAVDEINILMAMKPTGGVMGNPHANTEALAASVKMGNIINVHRHKLGALNKAVKKVTNDESGSEVSSEDEESDQETLLRNRKMPTNSKTRSQLFRALKDLNKRTNQYSVKPEKVLEYSEATKGKRMSAGSKLISAMTVIPLLTILFFIIVGSSTITEIKSHLVLKGHDPNDIPTLCIATYSLNWFVLIMCVLQNLIRSAPIISHALKGIDRDIKEAYMKKAAEDDEDED.

The span at 43–57 (EPKIEQEEPQQKPEV) shows a compositional bias: basic and acidic residues. Residues 43 to 91 (EPKIEQEEPQQKPEVVDVYSNETDKNEEEVSIITSEDEEEDEKGMLFKR) form a disordered region. Residues 67–84 (KNEEEVSIITSEDEEEDE) show a composition bias toward acidic residues. Transmembrane regions (helical) follow at residues 125–145 (IIGISVRFGFWFALLIPVAVL) and 162–182 (FSLCVILFLLLQAGIDLGLAI). The tract at residues 253 to 282 (DESGSEVSSEDEESDQETLLRNRKMPTNSK) is disordered. The next 2 helical transmembrane spans lie at 326-346 (LISAMTVIPLLTILFFIIVGS) and 366-386 (IPTLCIATYSLNWFVLIMCVL).

Its subcellular location is the host membrane. The polypeptide is Putative transmembrane protein ORF103 (Magallana gigas (Pacific oyster)).